We begin with the raw amino-acid sequence, 379 residues long: Homoserine O-acetyltransferase (379 aa).

In terms of domain architecture, AB hydrolase-1 spans 52 to 356 (NVVMVLHALT…IRGHDGFLVE (305 aa)). Catalysis depends on Ser-157, which acts as the Nucleophile. Substrate is bound at residue Arg-227. Catalysis depends on residues Asp-320 and His-350. Position 351 (Asp-351) interacts with substrate.

It belongs to the AB hydrolase superfamily. MetX family. Homodimer.

The protein localises to the cytoplasm. The catalysed reaction is L-homoserine + acetyl-CoA = O-acetyl-L-homoserine + CoA. Its pathway is amino-acid biosynthesis; L-methionine biosynthesis via de novo pathway; O-acetyl-L-homoserine from L-homoserine: step 1/1. Transfers an acetyl group from acetyl-CoA to L-homoserine, forming acetyl-L-homoserine. The polypeptide is Homoserine O-acetyltransferase (Mycobacterium marinum (strain ATCC BAA-535 / M)).